The primary structure comprises 206 residues: RILP-like protein 2 (206 aa).

The disordered stretch occupies residues Met1–Leu29. Positions Glu8–Gly19 are enriched in acidic residues. Residues Gly19 to Glu108 enclose the RH1 domain. Residues Leu67–Ser159 are a coiled coil. The region spanning Arg125–Leu197 is the RH2 domain. Residues Leu161–Glu189 form a disordered region. A compositionally biased stretch (basic and acidic residues) spans Pro168–Leu177.

It belongs to the RILPL family. As to quaternary structure, homodimer. Interacts with RAC1. Interacts (via N-terminus) with MYO5A, the interaction is required for its role in dendrite formation. Interacts with RAB8A; interaction is dependent on the phosphorylation of RAB8A on 'Thr-72'. Interacts with RAB10 and RAB12; interaction is dependent on the phosphorylation of 'Thr-73' on RAB10 and 'Ser-105' on RAB12.

It localises to the cytoplasm. Its subcellular location is the cytosol. The protein resides in the cytoskeleton. It is found in the microtubule organizing center. The protein localises to the centrosome. It localises to the cell projection. Its subcellular location is the cilium. Involved in cell shape and neuronal morphogenesis, positively regulating the establishment and maintenance of dendritic spines. Plays a role in cellular protein transport, including protein transport away from primary cilia. May function via activation of RAC1 and PAK1. In Bos taurus (Bovine), this protein is RILP-like protein 2 (RILPL2).